The chain runs to 342 residues: MAVVSMKQLLESGVHFGHQTRRWNPKMAPYIFTSRKDIHIIDLKRTALEIEKAYAALYDIAKDGGTVLFVGTKKQASEAIKEEAIRAGQFYVDHRWLGGTLTNFKTIRQRIKLLHSLYAAEADGTWAKLPKKEVLGLSRQRIKLERFLGGIKDMQRIPQALFVVDPRTEEIAVKEARKLGIPVFGIVDTNCDPDLVDYIIPANDDAIRAVKLLTWVMANAVVEANGGVVEKYEDEENAPFEQDEPRKPSQKPKQNRPENKPRFDKQAPRAAAKPEVKAEVKPEVKPEVKVEAKVAPKVVAEVKPTEDLSTLKVAELKELAKAKGIENYSKLRKAELVEALSK.

The interval 235-283 (EENAPFEQDEPRKPSQKPKQNRPENKPRFDKQAPRAAAKPEVKAEVKPE) is disordered. The segment covering 255–283 (NRPENKPRFDKQAPRAAAKPEVKAEVKPE) has biased composition (basic and acidic residues).

The protein belongs to the universal ribosomal protein uS2 family.

In Acholeplasma laidlawii (strain PG-8A), this protein is Small ribosomal subunit protein uS2.